The chain runs to 187 residues: Ribosome-recycling factor (187 aa).

This sequence belongs to the RRF family.

The protein localises to the cytoplasm. Functionally, responsible for the release of ribosomes from messenger RNA at the termination of protein biosynthesis. May increase the efficiency of translation by recycling ribosomes from one round of translation to another. The chain is Ribosome-recycling factor from Parabacteroides distasonis (strain ATCC 8503 / DSM 20701 / CIP 104284 / JCM 5825 / NCTC 11152).